A 275-amino-acid polypeptide reads, in one-letter code: Beta-lactamase OXA-3 (275 aa).

Residues 1–21 (MAIRIFAILFSTFVFGTFAHA) form the signal peptide. The Acyl-ester intermediate role is filled by Ser72. An N6-carboxylysine modification is found at Lys75. Substrate is bound at residue 210-212 (KTG).

The protein belongs to the class-D beta-lactamase family.

It catalyses the reaction a beta-lactam + H2O = a substituted beta-amino acid. In terms of biological role, this is an oxacillin-hydrolyzing beta-lactamase. The sequence is that of Beta-lactamase OXA-3 (bla) from Pseudomonas aeruginosa.